A 70-amino-acid chain; its full sequence is Turripeptide Gsg9.2 (70 aa).

A signal peptide spans 1 to 20 (MKVYCLLLVLLVGLVSQAHG). The 50-residue stretch at 21–70 (QLDKKCQMVCTMDYRPVCGSDGRTYPNKCTLTSTACMSQRSITVFHDGEC) folds into the Kazal-like domain. Intrachain disulfides connect cysteine 26-cysteine 56, cysteine 30-cysteine 49, and cysteine 38-cysteine 70.

It belongs to the conopeptide P-like superfamily. As to expression, expressed by the venom duct.

The protein localises to the secreted. Functionally, acts as a neurotoxin by inhibiting an ion channel. May also act as a serine protease inhibitor, since it possess the kazal serine protease inhibitor signature. This Gemmula sogodensis (Gem-turris) protein is Turripeptide Gsg9.2.